Here is a 310-residue protein sequence, read N- to C-terminus: 4-hydroxy-3-methylbut-2-enyl diphosphate reductase (310 aa).

A [4Fe-4S] cluster-binding site is contributed by Cys-13. Positions 42 and 75 each coordinate (2E)-4-hydroxy-3-methylbut-2-enyl diphosphate. Dimethylallyl diphosphate-binding residues include His-42 and His-75. His-42 and His-75 together coordinate isopentenyl diphosphate. [4Fe-4S] cluster is bound at residue Cys-97. A (2E)-4-hydroxy-3-methylbut-2-enyl diphosphate-binding site is contributed by His-125. His-125 contributes to the dimethylallyl diphosphate binding site. His-125 contacts isopentenyl diphosphate. Glu-127 serves as the catalytic Proton donor. A (2E)-4-hydroxy-3-methylbut-2-enyl diphosphate-binding site is contributed by Thr-165. Position 195 (Cys-195) interacts with [4Fe-4S] cluster. (2E)-4-hydroxy-3-methylbut-2-enyl diphosphate contacts are provided by Ser-223, Ser-224, Asn-225, and Ser-267. Dimethylallyl diphosphate contacts are provided by Ser-223, Ser-224, Asn-225, and Ser-267. 4 residues coordinate isopentenyl diphosphate: Ser-223, Ser-224, Asn-225, and Ser-267.

This sequence belongs to the IspH family. It depends on [4Fe-4S] cluster as a cofactor.

It carries out the reaction isopentenyl diphosphate + 2 oxidized [2Fe-2S]-[ferredoxin] + H2O = (2E)-4-hydroxy-3-methylbut-2-enyl diphosphate + 2 reduced [2Fe-2S]-[ferredoxin] + 2 H(+). It catalyses the reaction dimethylallyl diphosphate + 2 oxidized [2Fe-2S]-[ferredoxin] + H2O = (2E)-4-hydroxy-3-methylbut-2-enyl diphosphate + 2 reduced [2Fe-2S]-[ferredoxin] + 2 H(+). The protein operates within isoprenoid biosynthesis; dimethylallyl diphosphate biosynthesis; dimethylallyl diphosphate from (2E)-4-hydroxy-3-methylbutenyl diphosphate: step 1/1. It functions in the pathway isoprenoid biosynthesis; isopentenyl diphosphate biosynthesis via DXP pathway; isopentenyl diphosphate from 1-deoxy-D-xylulose 5-phosphate: step 6/6. Catalyzes the conversion of 1-hydroxy-2-methyl-2-(E)-butenyl 4-diphosphate (HMBPP) into a mixture of isopentenyl diphosphate (IPP) and dimethylallyl diphosphate (DMAPP). Acts in the terminal step of the DOXP/MEP pathway for isoprenoid precursor biosynthesis. This Chlamydia pneumoniae (Chlamydophila pneumoniae) protein is 4-hydroxy-3-methylbut-2-enyl diphosphate reductase.